Reading from the N-terminus, the 222-residue chain is Cytochrome b6 (222 aa).

The chain crosses the membrane as a helical span at residues 39-59 (IFYCLGGLTLTCFLIQFATGF). Tyrosine 41 provides a ligand contact to heme b. Residue cysteine 42 participates in heme c binding. Positions 90, 93, 94, 107, and 110 each coordinate heme b. The next 3 helical transmembrane spans lie at 97–117 (ASMMVLMMILHVFRVYLTGGF), 123–143 (LTWVVGVMLAVTTVTFGVTGY), and 193–213 (LHTFVLPWAIAVLLLLHFLMI). 2 residues coordinate heme b: histidine 194 and histidine 209. The heme c site is built by arginine 214 and isoleucine 218. Heme b is bound at residue serine 219.

Belongs to the cytochrome b family. PetB subfamily. The 4 large subunits of the cytochrome b6-f complex are cytochrome b6, subunit IV (17 kDa polypeptide, PetD), cytochrome f and the Rieske protein, while the 4 small subunits are PetG, PetL, PetM and PetN. The complex functions as a dimer. Requires heme b as cofactor. Heme c serves as cofactor.

The protein resides in the cellular thylakoid membrane. In terms of biological role, component of the cytochrome b6-f complex, which mediates electron transfer between photosystem II (PSII) and photosystem I (PSI), cyclic electron flow around PSI, and state transitions. In Synechocystis sp. (strain ATCC 27184 / PCC 6803 / Kazusa), this protein is Cytochrome b6.